The chain runs to 692 residues: Glycine--tRNA ligase beta subunit (692 aa).

Belongs to the class-II aminoacyl-tRNA synthetase family. In terms of assembly, tetramer of two alpha and two beta subunits.

The protein localises to the cytoplasm. It catalyses the reaction tRNA(Gly) + glycine + ATP = glycyl-tRNA(Gly) + AMP + diphosphate. The chain is Glycine--tRNA ligase beta subunit from Hahella chejuensis (strain KCTC 2396).